The primary structure comprises 849 residues: MARNSIKKSPVVKKKDTPIVRKRKPIQQEAEEDSNDEESEDELNVEGLIDASDDEDEEEEQEQEEQPQEEENNSDDDDDDDDDDDDNNSEADSEEELNQLLGEEEEEDPSDYNSDEFSDEPKDDDLSRINIKSLSVSDPSIQKNSISKFSDGSIRILKPEIEPKYDSDDSDAENFNTIGNIPISAYDEMPHIGYDINGKRIMRPAKGSALDQLLESIDLPEGWTGLLDQNTGTSLKLTDEELELIRKIQQQENTDENINPYEPLIDWFTKDEEIMPVTAVPEPKRRFVPSKHEAKRVMKIVKAIREGRIIPPNKVKQQLTEEEEEDQFNFDLWQDEIEISDHIMNLRAPKLPPPTNEESYNPPEEYLLTEEEKSKWLQESPIDRERNFLPQKYNSLRQVPGYQDSVRERFERSLDLYLAPRVRHNKLNIDPDSLIPDLPSPKDLRPFPIRCSTIYEGHTGKIRTISIDPQGLWLATGSDDGSVRIWEILTGRQVYKIQLINKEINNEDHIECLEWNPDSSCGILAVCVGENIYLIVPPIFGFDIENSGKLRIESGWGYDTFGNKKKDLKISSQKEEDNKESDNEDEDEEEDNDDDDDDDEPETSSTVEPKKEVAKWYPPNTEQASMGISAIIQCRKTIKKLSWHRKGDYFVTVSPDSKNTAVLIHQISKHLSQSPFKKSKGIIMDAKFHPFKPQLFVASQRQIKIYDLAQQVLLKKLMPGVRLLSTIDIHPRGDNLIAGSYDKRVLWHDLDLSATPYKTLRYHEKAVRSIKFHKGNLPLFASASDDGNIHIFHGTVYDDLMTNPLLVPLKKLNGHKIINQIGILDLIWHPKEPWLFSAGADGTARLWTT.

The disordered stretch occupies residues 1–130 (MARNSIKKSP…PKDDDLSRIN (130 aa)). 2 stretches are compositionally biased toward acidic residues: residues 29-44 (EAEE…DELN) and 51-123 (ASDD…EPKD). Residues 286-405 (RFVPSKHEAK…LRQVPGYQDS (120 aa)) are required for interaction with NOP7. The interval 405–441 (SVRERFERSLDLYLAPRVRHNKLNIDPDSLIPDLPSP) is required for interaction with YTM1. WD repeat units follow at residues 457 to 496 (GHTG…QVYK) and 505 to 545 (NNED…FDIE). The span at 569 to 581 (KISSQKEEDNKES) shows a compositional bias: basic and acidic residues. Residues 569–619 (KISSQKEEDNKESDNEDEDEEEDNDDDDDDDEPETSSTVEPKKEVAKWYPP) form a disordered region. Residues 582–602 (DNEDEDEEEDNDDDDDDDEPE) show a composition bias toward acidic residues. 5 WD repeats span residues 633-675 (QCRK…SQSP), 678-716 (KSKG…LLKK), 719-758 (PGVR…TPYK), 762-802 (YHEK…DLMT), and 818-849 (INQI…LWTT).

It belongs to the WD repeat BOP1/ERB1 family. In terms of assembly, component of the NOP7 complex, composed of ERB1, NOP7 and YTM1. The complex is held together by ERB1, which interacts with NOP7 via its N-terminal domain and with YTM1 via a high-affinity interaction between the seven-bladed beta-propeller domains of the 2 proteins. The NOP7 complex associates with the 66S pre-ribosome.

Its subcellular location is the nucleus. The protein localises to the nucleolus. It is found in the nucleoplasm. Component of the NOP7 complex, which is required for maturation of the 25S and 5.8S ribosomal RNAs and formation of the 60S ribosome. This Candida albicans (strain SC5314 / ATCC MYA-2876) (Yeast) protein is Ribosome biogenesis protein ERB1.